Reading from the N-terminus, the 404-residue chain is Multidrug resistance protein MdtG (404 aa).

The next 11 helical transmembrane spans lie at Leu-19–Val-39, Leu-56–Ala-76, Leu-90–Ile-110, Ala-113–Val-133, Thr-144–Ala-164, Pro-171–Ile-191, Leu-222–Leu-242, Ile-254–Pro-274, Ile-288–Thr-308, Phe-317–Asn-337, and Ala-376–Leu-396.

Belongs to the major facilitator superfamily. DHA1 family. MdtG (TC 2.A.1.2.20) subfamily.

The protein localises to the cell inner membrane. This is Multidrug resistance protein MdtG from Salmonella heidelberg (strain SL476).